The primary structure comprises 418 residues: Glutamyl-tRNA reductase (418 aa).

Substrate-binding positions include 49 to 52 (TCNR), Ser-109, 114 to 116 (EPQ), and Gln-120. Residue Cys-50 is the Nucleophile of the active site. NADP(+) is bound at residue 189 to 194 (GAGETI).

This sequence belongs to the glutamyl-tRNA reductase family. As to quaternary structure, homodimer.

The catalysed reaction is (S)-4-amino-5-oxopentanoate + tRNA(Glu) + NADP(+) = L-glutamyl-tRNA(Glu) + NADPH + H(+). It functions in the pathway porphyrin-containing compound metabolism; protoporphyrin-IX biosynthesis; 5-aminolevulinate from L-glutamyl-tRNA(Glu): step 1/2. Catalyzes the NADPH-dependent reduction of glutamyl-tRNA(Glu) to glutamate 1-semialdehyde (GSA). This Escherichia coli O45:K1 (strain S88 / ExPEC) protein is Glutamyl-tRNA reductase.